The primary structure comprises 338 residues: tRNA N6-adenosine threonylcarbamoyltransferase (338 aa).

Fe cation contacts are provided by His-114 and His-118. Residues 136-140, Asp-169, Gly-182, Asp-186, and Asn-275 each bind substrate; that span reads LVSGG. A Fe cation-binding site is contributed by Asp-301.

Belongs to the KAE1 / TsaD family. Requires Fe(2+) as cofactor.

It localises to the cytoplasm. It carries out the reaction L-threonylcarbamoyladenylate + adenosine(37) in tRNA = N(6)-L-threonylcarbamoyladenosine(37) in tRNA + AMP + H(+). In terms of biological role, required for the formation of a threonylcarbamoyl group on adenosine at position 37 (t(6)A37) in tRNAs that read codons beginning with adenine. Is involved in the transfer of the threonylcarbamoyl moiety of threonylcarbamoyl-AMP (TC-AMP) to the N6 group of A37, together with TsaE and TsaB. TsaD likely plays a direct catalytic role in this reaction. This is tRNA N6-adenosine threonylcarbamoyltransferase from Streptococcus equi subsp. equi (strain 4047).